Consider the following 440-residue polypeptide: Beta-1,3-galactosyl-O-glycosyl-glycoprotein beta-1,6-N-acetylglucosaminyltransferase (440 aa).

Topologically, residues M1–K9 are cytoplasmic. A helical; Signal-anchor for type II membrane protein membrane pass occupies residues L10 to L30. The Lumenal segment spans residues R31–L440. N-linked (GlcNAc...) asparagine; by host glycosylation is found at N72 and N108. Cystine bridges form between C73–C230, C164–C384, C185–C212, and C393–C425.

Belongs to the glycosyltransferase 14 family.

It is found in the host Golgi apparatus membrane. It carries out the reaction a 3-O-[beta-D-galactosyl-(1-&gt;3)-N-acetyl-alpha-D-galactosaminyl]-L-seryl-[protein] + UDP-N-acetyl-alpha-D-glucosamine = 3-O-{beta-D-galactosyl-(1-&gt;3)-[N-acetyl-beta-D-glucosaminyl-(1-&gt;6)]-N-acetyl-alpha-D-galactosaminyl}-L-seryl-[protein] + UDP + H(+). The catalysed reaction is a 3-O-[beta-D-galactosyl-(1-&gt;3)-N-acetyl-alpha-D-galactosaminyl]-L-threonyl-[protein] + UDP-N-acetyl-alpha-D-glucosamine = a 3-O-{beta-D-galactosyl-(1-&gt;3)-[N-acetyl-beta-D-glucosaminyl-(1-&gt;6)]-N-acetyl-alpha-D-galactosaminyl}-L-threonyl-[protein] + UDP + H(+). The enzyme catalyses a beta-D-Gal-(1-&gt;4)-beta-D-GlcNAc-(1-&gt;3)-beta-D-Gal-(1-&gt;4)-beta-D-GlcNAc derivative + UDP-N-acetyl-alpha-D-glucosamine = a beta-D-Gal-(1-&gt;4)-beta-D-GlcNAc-(1-&gt;3)-[beta-D-GlcNAc-(1-&gt;6)]-beta-D-Gal-(1-&gt;4)-N-acetyl-beta-D-glucosaminyl derivative + UDP + H(+). It catalyses the reaction 3-O-[N-acetyl-beta-D-glucosaminyl-(1-&gt;3)-N-acetyl-alpha-D-galactosaminyl]-L-seryl-[protein] + UDP-N-acetyl-alpha-D-glucosamine = 3-O-[N-acetyl-beta-D-glucosaminyl-(1-&gt;3)-[N-acetyl-beta-D-glucosaminyl-(1-&gt;6)]-N-acetyl-alpha-D-galactosaminyl]-L-seryl-[protein] + UDP + H(+). It carries out the reaction a 3-O-[N-acetyl-beta-D-glucosaminyl-(1-&gt;3)-N-acetyl-alpha-D-galactosaminyl]-L-threonyl-[protein] + UDP-N-acetyl-alpha-D-glucosamine = 3-O-[N-acetyl-beta-D-glucosaminyl-(1-&gt;3)-[N-acetyl-beta-D-glucosaminyl-(1-&gt;6)]-N-acetyl-alpha-D-galactosaminyl]-L-threonyl-[protein] + UDP + H(+). The protein operates within protein modification; protein glycosylation. In terms of biological role, non-essential glycosyltransferase that can synthesize all known mucin beta 6 N-acetylglucosaminides. Mediates core 2 and core 4 O-glycan branching, 2 important steps in mucin-type biosynthesis. Has also I-branching enzyme activity by converting linear into branched poly-N-acetyllactosaminoglycans. Contributes to the post-translational modifications of structural proteins. The sequence is that of Beta-1,3-galactosyl-O-glycosyl-glycoprotein beta-1,6-N-acetylglucosaminyltransferase (Bo17) from Bovine herpesvirus 4 (strain V. test) (BoHV-4).